We begin with the raw amino-acid sequence, 555 residues long: Bifunctional epoxide hydrolase 2 (555 aa).

Residues 1–224 form a phosphatase region; the sequence is MALRAAVFDL…KVTGVQLLQT (224 aa). Mg(2+)-binding residues include Asp-9 and Asp-11. Lys-43 bears the N6-acetyllysine mark. Phosphate is bound at residue 123–124; sequence TN. Asp-185 serves as a coordination point for Mg(2+). 2 positions are modified to N6-acetyllysine: Lys-191 and Lys-215. An epoxide hydrolase region spans residues 235-555; sequence SALSHGYVLI…ARNPLVDSKL (321 aa). The region spanning 259–531 is the AB hydrolase-1 domain; the sequence is PAVCLCHGFP…CGHWTQIDKP (273 aa). The Nucleophile role is filled by Asp-335. A Phosphoserine modification is found at Ser-370. Tyr-383 contributes to the substrate binding site. An N6-succinyllysine modification is found at Lys-455. The active-site Proton donor is Tyr-466. Position 505 is an N6-succinyllysine (Lys-505). Residue Cys-522 is the site of S-(15-deoxy-Delta12,14-prostaglandin J2-9-yl)cysteine attachment. The active-site Proton acceptor is the His-524. The short motif at 553-555 is the Microbody targeting signal element; sequence SKL. An N6-succinyllysine modification is found at Lys-554.

The protein belongs to the AB hydrolase superfamily. Epoxide hydrolase family. As to quaternary structure, homodimer. The cofactor is Mg(2+). In terms of processing, the covalent modification of cysteine by 15-deoxy-Delta12,14-prostaglandin-J2 is autocatalytic and reversible. It may occur as an alternative to other cysteine modifications, such as S-nitrosylation and S-palmitoylation.

The protein localises to the cytoplasm. The protein resides in the peroxisome. The enzyme catalyses an epoxide + H2O = an ethanediol. The catalysed reaction is (9S,10S)-10-hydroxy-9-(phosphooxy)octadecanoate + H2O = (9S,10S)-9,10-dihydroxyoctadecanoate + phosphate. It catalyses the reaction (14R,15S)-epoxy-(5Z,8Z,11Z)-eicosatrienoate + H2O = (14R,15R)-dihydroxy-(5Z,8Z,11Z)-eicosatrienoate. Its activity is regulated as follows. Inhibited by 1-(1-acetylpiperidin-4-yl)-3-(4-(trifl uoromethoxy)phenyl)urea (TPAU), 1-cyclohexyl-3-dodecylurea (CDU), 12-(3-adamantan-1-yl-ureido)-dodecanoic acid (AUDA), 1-((3S, 5S, 7S)-adamantan-1-yl)-3-(5-(2-(2-ethoxyethoxy) ethoxy)pentyl)urea (AEPU), N-adamantyl-N[']-cyclohexyl urea (ACU), 4-(((1S, 4S)-4-(3-((3S, 5S, 7S)-adamantan-1-yl) ureido)cyclohexyl)oxy)benzoic acid (c-AUCB), 4-(((1R, 4R)-4-(3-((3S, 5S, 7S)-adamantan-1-yl)ureido)cyclohexyl)oxy)benzoic acid (t-AUCB), 4-(((1R, 4R)-4-(3-(4(trifluoromethoxy)phenyl)ureido)cyclohexyl)oxy)benzoic acid (t-TAUCB) and to a lesser extent by 8-(3-((3S, 5S, 7S)-adamantan-1-yl)ureido) octanoic acid (AUOA). In terms of biological role, bifunctional enzyme. The C-terminal domain has epoxide hydrolase activity and acts on epoxides (alkene oxides, oxiranes) and arene oxides. Plays a role in xenobiotic metabolism by degrading potentially toxic epoxides. Also determines steady-state levels of physiological mediators. The N-terminal domain has lipid phosphatase activity, with the highest activity towards threo-9,10-phosphonooxy-hydroxy-octadecanoic acid, followed by erythro-9,10-phosphonooxy-hydroxy-octadecanoic acid, 12-phosphonooxy-octadec-9Z-enoic acid and 12-phosphonooxy-octadec-9E-enoic acid. This Sus scrofa (Pig) protein is Bifunctional epoxide hydrolase 2 (EPHX2).